A 109-amino-acid chain; its full sequence is Large ribosomal subunit protein uL24 (109 aa).

The protein belongs to the universal ribosomal protein uL24 family. As to quaternary structure, part of the 50S ribosomal subunit.

Functionally, one of two assembly initiator proteins, it binds directly to the 5'-end of the 23S rRNA, where it nucleates assembly of the 50S subunit. In terms of biological role, one of the proteins that surrounds the polypeptide exit tunnel on the outside of the subunit. The protein is Large ribosomal subunit protein uL24 of Syntrophotalea carbinolica (strain DSM 2380 / NBRC 103641 / GraBd1) (Pelobacter carbinolicus).